Consider the following 206-residue polypeptide: MIDPDGYRPNVGIVLMRQDGQVFWARRVRRDGWQFPQGGMNTDETPVEAMYRELQEETGLLPEHVEVLGATPGWLRYKLPARAIRRNERQVCIGQKQVWFLLRLTGDESHVCLDHTDSPEFDHWRWVDFWYPVEHVVMFKRGVYARALRHLAPLAQGVAGQGVTAMPKSAAEAWMPGHTAGHDRPRKRPRSRGYWPKKAQGDVPPT.

One can recognise a Nudix hydrolase domain in the interval 6–149 (GYRPNVGIVL…KRGVYARALR (144 aa)). The Nudix box signature appears at 38–59 (GGMNTDETPVEAMYRELQEETG). The disordered stretch occupies residues 175-206 (MPGHTAGHDRPRKRPRSRGYWPKKAQGDVPPT).

It belongs to the Nudix hydrolase family. RppH subfamily. Requires a divalent metal cation as cofactor.

Accelerates the degradation of transcripts by removing pyrophosphate from the 5'-end of triphosphorylated RNA, leading to a more labile monophosphorylated state that can stimulate subsequent ribonuclease cleavage. The polypeptide is RNA pyrophosphohydrolase (Stenotrophomonas maltophilia (strain R551-3)).